Consider the following 224-residue polypeptide: ATP-dependent dethiobiotin synthetase BioD (224 aa).

13 to 18 (NVGKTI) contacts ATP. Residue threonine 17 participates in Mg(2+) binding. Lysine 38 is an active-site residue. A substrate-binding site is contributed by serine 42. ATP-binding positions include aspartate 55, 116-119 (EGAG), 176-177 (NN), and asparagine 211. Mg(2+) contacts are provided by aspartate 55 and glutamate 116.

Belongs to the dethiobiotin synthetase family. In terms of assembly, homodimer. Requires Mg(2+) as cofactor.

The protein localises to the cytoplasm. The catalysed reaction is (7R,8S)-7,8-diammoniononanoate + CO2 + ATP = (4R,5S)-dethiobiotin + ADP + phosphate + 3 H(+). The protein operates within cofactor biosynthesis; biotin biosynthesis; biotin from 7,8-diaminononanoate: step 1/2. In terms of biological role, catalyzes a mechanistically unusual reaction, the ATP-dependent insertion of CO2 between the N7 and N8 nitrogen atoms of 7,8-diaminopelargonic acid (DAPA, also called 7,8-diammoniononanoate) to form a ureido ring. The polypeptide is ATP-dependent dethiobiotin synthetase BioD (Buchnera aphidicola subsp. Acyrthosiphon pisum (strain APS) (Acyrthosiphon pisum symbiotic bacterium)).